Reading from the N-terminus, the 270-residue chain is Shikimate dehydrogenase (NADP(+)) (270 aa).

Shikimate is bound by residues 15–17 and T62; that span reads SLS. Catalysis depends on K66, which acts as the Proton acceptor. Shikimate is bound by residues N87 and D102. NADP(+)-binding positions include 126–130, 149–154, and I210; these read GAGGS and NRTVGR. Y212 is a shikimate binding site. G233 contributes to the NADP(+) binding site.

This sequence belongs to the shikimate dehydrogenase family. In terms of assembly, homodimer.

The enzyme catalyses shikimate + NADP(+) = 3-dehydroshikimate + NADPH + H(+). It functions in the pathway metabolic intermediate biosynthesis; chorismate biosynthesis; chorismate from D-erythrose 4-phosphate and phosphoenolpyruvate: step 4/7. Involved in the biosynthesis of the chorismate, which leads to the biosynthesis of aromatic amino acids. Catalyzes the reversible NADPH linked reduction of 3-dehydroshikimate (DHSA) to yield shikimate (SA). This is Shikimate dehydrogenase (NADP(+)) from Hyphomonas neptunium (strain ATCC 15444).